Consider the following 202-residue polypeptide: GTP cyclohydrolase 1 (202 aa).

Zn(2+)-binding residues include cysteine 93, histidine 96, and cysteine 164.

Belongs to the GTP cyclohydrolase I family. In terms of assembly, toroid-shaped homodecamer, composed of two pentamers of five dimers.

The enzyme catalyses GTP + H2O = 7,8-dihydroneopterin 3'-triphosphate + formate + H(+). It participates in cofactor biosynthesis; 7,8-dihydroneopterin triphosphate biosynthesis; 7,8-dihydroneopterin triphosphate from GTP: step 1/1. The chain is GTP cyclohydrolase 1 from Pelagibacter ubique (strain HTCC1062).